A 396-amino-acid chain; its full sequence is Elongation factor Tu (396 aa).

Residues 10 to 206 form the tr-type G domain; it reads KAHVNIGTIG…AVDEYIPDPV (197 aa). The segment at 19–26 is G1; it reads GHVDHGKT. 19–26 serves as a coordination point for GTP; sequence GHVDHGKT. A Mg(2+)-binding site is contributed by Thr-26. The interval 62-66 is G2; that stretch reads GITIN. The interval 83 to 86 is G3; it reads DAPG. Residues 83-87 and 138-141 each bind GTP; these read DAPGH and NKSD. Residues 138–141 form a G4 region; it reads NKSD. A G5 region spans residues 176–178; the sequence is SAL.

Belongs to the TRAFAC class translation factor GTPase superfamily. Classic translation factor GTPase family. EF-Tu/EF-1A subfamily. Monomer.

It is found in the cytoplasm. It carries out the reaction GTP + H2O = GDP + phosphate + H(+). Functionally, GTP hydrolase that promotes the GTP-dependent binding of aminoacyl-tRNA to the A-site of ribosomes during protein biosynthesis. The polypeptide is Elongation factor Tu (Micrococcus luteus (Micrococcus lysodeikticus)).